A 460-amino-acid polypeptide reads, in one-letter code: MTGYSTNMRIKLPVFCLLLEFITIILFAVFVRYDHESDAKQWHDEMRNHSVQNAENDFYFRYPSFQDVHVMIFIGFGFLMTFLKRYGFSSVAFNFLIAAFGLQWSTLIQGFFHGFHDGKIHVGIESMINADFCTGAVLISFGAVLGKTSPVQLIVMTLIEVTLFGINEYIILNIVGAKDAGGSMTIHTFGAYFGLIVSRVLYRDDLEKSRQREGSVYHSDLFAMIGTIYLWMFWPSFNSAITAHGDDQHRTVMNTYYSLAACTLATFGFSALLNGEGKLDMVHIQNAALAGGVAVGTSGEMMLTPFGAMIAGTLAGMISVLGYKYLTPVLDSKLKIQDTCGVHNLHGMPGILGALIGAIVALFATAEIYGAGMEDVFPLISDGSRTAKQQSLYQFLALLVALGFAILGGLVVGFILKLPIFGTPSDAECFEDAVYWEVPGGEGHQQLTVVINNEDPDTQA.

Topologically, residues 1–10 (MTGYSTNMRI) are cytoplasmic. A helical transmembrane segment spans residues 11-31 (KLPVFCLLLEFITIILFAVFV). Residues 32-62 (RYDHESDAKQWHDEMRNHSVQNAENDFYFRY) are Extracellular-facing. A glycan (N-linked (GlcNAc...) asparagine) is linked at asparagine 48. A helical membrane pass occupies residues 63-83 (PSFQDVHVMIFIGFGFLMTFL). Residues 84–87 (KRYG) lie on the Cytoplasmic side of the membrane. Residues 88–108 (FSSVAFNFLIAAFGLQWSTLI) form a helical membrane-spanning segment. At 109–125 (QGFFHGFHDGKIHVGIE) the chain is on the extracellular side. A helical membrane pass occupies residues 126-146 (SMINADFCTGAVLISFGAVLG). The Cytoplasmic segment spans residues 147–150 (KTSP). The helical transmembrane segment at 151–171 (VQLIVMTLIEVTLFGINEYII) threads the bilayer. Residues 172-179 (LNIVGAKD) lie on the Extracellular side of the membrane. A helical transmembrane segment spans residues 180-202 (AGGSMTIHTFGAYFGLIVSRVLY). The Cytoplasmic segment spans residues 203 to 220 (RDDLEKSRQREGSVYHSD). A helical transmembrane segment spans residues 221-241 (LFAMIGTIYLWMFWPSFNSAI). Topologically, residues 242–252 (TAHGDDQHRTV) are extracellular. The helical transmembrane segment at 253-273 (MNTYYSLAACTLATFGFSALL) threads the bilayer. At 274 to 283 (NGEGKLDMVH) the chain is on the cytoplasmic side. The helical transmembrane segment at 284–304 (IQNAALAGGVAVGTSGEMMLT) threads the bilayer. Residue proline 305 is a topological domain, extracellular. A helical transmembrane segment spans residues 306 to 326 (FGAMIAGTLAGMISVLGYKYL). The Cytoplasmic segment spans residues 327–347 (TPVLDSKLKIQDTCGVHNLHG). Residues 348-368 (MPGILGALIGAIVALFATAEI) form a helical membrane-spanning segment. Over 369–394 (YGAGMEDVFPLISDGSRTAKQQSLYQ) the chain is Extracellular. A helical membrane pass occupies residues 395-415 (FLALLVALGFAILGGLVVGFI). The Cytoplasmic portion of the chain corresponds to 416-460 (LKLPIFGTPSDAECFEDAVYWEVPGGEGHQQLTVVINNEDPDTQA).

The protein belongs to the ammonium transporter (TC 2.A.49) family. Rh subfamily.

It is found in the basolateral cell membrane. Its subcellular location is the cytoplasmic vesicle membrane. In terms of biological role, functions as a specific ammonium transporter. This Xenopus tropicalis (Western clawed frog) protein is Ammonium transporter Rh type B (rhbg).